The primary structure comprises 218 residues: Small ribosomal subunit protein uS3 (218 aa).

Positions 40–109 (IRKIINTEYS…DVSINIREVK (70 aa)) constitute a KH type-2 domain.

Belongs to the universal ribosomal protein uS3 family. In terms of assembly, part of the 30S ribosomal subunit. Forms a tight complex with proteins S10 and S14.

Its function is as follows. Binds the lower part of the 30S subunit head. Binds mRNA in the 70S ribosome, positioning it for translation. The polypeptide is Small ribosomal subunit protein uS3 (Orientia tsutsugamushi (strain Boryong) (Rickettsia tsutsugamushi)).